The sequence spans 84 residues: U8-theraphotoxin-Hhn1d (84 aa).

The signal sequence occupies residues 1 to 21 (MKVVLIVCLVWVMAMMELVSC). 5 disulfides stabilise this stretch: C23–C35, C29–C44, C34–C67, C54–C75, and C69–C81.

It belongs to the AVIT (prokineticin) family. As to expression, expressed by the venom gland.

The protein localises to the secreted. This chain is U8-theraphotoxin-Hhn1d, found in Cyriopagopus hainanus (Chinese bird spider).